A 687-amino-acid chain; its full sequence is Fatty acid oxidation complex subunit alpha (687 aa).

The segment at 1 to 191 (MKNTSAFAWT…KLGVVDASVP (191 aa)) is enoyl-CoA hydratase. The tract at residues 307-687 (KSIDYVGVLG…ADKYGDRFIE (381 aa)) is 3-hydroxyacyl-CoA dehydrogenase.

The protein in the N-terminal section; belongs to the enoyl-CoA hydratase/isomerase family. It in the central section; belongs to the 3-hydroxyacyl-CoA dehydrogenase family. Heterotetramer of two alpha chains (FadJ) and two beta chains (FadI).

The protein localises to the cytoplasm. It catalyses the reaction a (3S)-3-hydroxyacyl-CoA = a (2E)-enoyl-CoA + H2O. The catalysed reaction is a 4-saturated-(3S)-3-hydroxyacyl-CoA = a (3E)-enoyl-CoA + H2O. The enzyme catalyses a (3S)-3-hydroxyacyl-CoA + NAD(+) = a 3-oxoacyl-CoA + NADH + H(+). It carries out the reaction (3S)-3-hydroxybutanoyl-CoA = (3R)-3-hydroxybutanoyl-CoA. Its pathway is lipid metabolism; fatty acid beta-oxidation. In terms of biological role, catalyzes the formation of a hydroxyacyl-CoA by addition of water on enoyl-CoA. Also exhibits 3-hydroxyacyl-CoA epimerase and 3-hydroxyacyl-CoA dehydrogenase activities. In Aliivibrio fischeri (strain ATCC 700601 / ES114) (Vibrio fischeri), this protein is Fatty acid oxidation complex subunit alpha.